Consider the following 185-residue polypeptide: Probable nicotinate-nucleotide adenylyltransferase (185 aa).

It belongs to the NadD family.

It catalyses the reaction nicotinate beta-D-ribonucleotide + ATP + H(+) = deamido-NAD(+) + diphosphate. It functions in the pathway cofactor biosynthesis; NAD(+) biosynthesis; deamido-NAD(+) from nicotinate D-ribonucleotide: step 1/1. Catalyzes the reversible adenylation of nicotinate mononucleotide (NaMN) to nicotinic acid adenine dinucleotide (NaAD). This chain is Probable nicotinate-nucleotide adenylyltransferase, found in Methylorubrum extorquens (strain PA1) (Methylobacterium extorquens).